Reading from the N-terminus, the 92-residue chain is Large ribosomal subunit protein eL43 (92 aa).

The C4-type zinc finger occupies 39-60; that stretch reads CSFCGKKTVRRGAAGIWSCHSC.

This sequence belongs to the eukaryotic ribosomal protein eL43 family.

In Candida glabrata (strain ATCC 2001 / BCRC 20586 / JCM 3761 / NBRC 0622 / NRRL Y-65 / CBS 138) (Yeast), this protein is Large ribosomal subunit protein eL43 (RPL43).